The primary structure comprises 1714 residues: Protein ESSENTIAL FOR POTEXVIRUS ACCUMULATION 1 (1714 aa).

Disordered stretches follow at residues 1–296 (MANS…PPHL) and 358–511 (IVSS…SKGE). At serine 39 the chain carries Phosphoserine. Residues 58–75 (DPNQYGNHSDVVRTTGNG) are compositionally biased toward polar residues. 2 stretches are compositionally biased toward basic and acidic residues: residues 96-136 (ESGR…DRWD) and 143-203 (GEQR…REKG). 2 stretches are compositionally biased toward polar residues: residues 230 to 244 (HNQSTPNKQVTSFSH) and 268 to 278 (IFTSAPNQSHP). 2 stretches are compositionally biased toward basic and acidic residues: residues 389–422 (GSREDMTFGAEESKDESGETRNYPDDKFRPEASH) and 430–441 (RGNEAPVRELKE). Polar residues predominate over residues 444 to 463 (MQGNAHVQSASPWRQSSGGE). Basic and acidic residues predominate over residues 464-483 (RSNRNSHDWNDPSADSRLKS). In terms of domain architecture, GYF spans 546 to 597 (ELSLYYKDPQGLIQGPFSGSDIIGWFEAGYFGIDLLVRLASAPNDSPFSLLG). Disordered stretches follow at residues 728 to 753 (ESANLMPGSENVSENAQQPTRSPSSD), 1092 to 1205 (VKNN…KPAP), and 1437 to 1566 (QEKM…GKKE). The span at 737-753 (ENVSENAQQPTRSPSSD) shows a compositional bias: polar residues. Over residues 1142-1162 (SEIKGKTKKSADTLIDNDTHL) the composition is skewed to basic and acidic residues. Residues 1163–1180 (IKSSTATASNTSQMSSEV) are compositionally biased toward polar residues. Low complexity predominate over residues 1467-1488 (ASWSRSASSPSQAVSQSSSQSK). Residues 1515–1544 (LTSQNSWGTKNTPGKVNAGTSLNRQKSVSM) show a composition bias toward polar residues.

As to quaternary structure, associates with eIF4E initiation factors and the ribosome complex, thus likely contributing to the proper translation of target proteins. Interacts directly with RPL18B and eIF4E1. Binds to SMG7. Post-translationally, quickly phosphorylated at Ser-39 after treatment of seedlings with the pathogen-associated molecular pattern (PAMP) flg22. As to expression, expressed in all tissues, mostly in flowers, leaves and stems, and, to a lower extent, in roots (at protein level).

Its subcellular location is the cytoplasm. The protein resides in the cytosol. The protein localises to the P-body. In terms of biological role, translational repressor involved in the negative regulation of immune receptor accumulation via the inhibition of nucleotide-binding leucine-rich repeat (NLR) receptor mediated defense. Represses NLR protein accumulation (e.g. SNC1, RPS4, RPM1 and RPS2). Together with SMG7, helps to restrict effector-triggered immunity (ETI) cell death induction during pathogen infection in a salicylic acid- (SA) and reactive oxygen species- (ROS) independent manner. Required for pathogen-associated molecular pattern (PAMP)-induced suppression of necrotrophic fungal (e.g. F.moniliforme) pathogen-derived mycotoxin-triggered (e.g. fumonisin B1) cell death. Its function is as follows. (Microbial infection) Required for early steps of plantago asiatica mosaic virus (PlAMV, genus Potexvirus) infection. Facilitates pathogenic growth of avirulent hemi-biotrophic bacteria P.syringae pv. tomato (Pst) DC3000 (e.g. AvrRps4 and AvrRpm1) and of the compatible oomycete H.arabidopsidis Noco2. The sequence is that of Protein ESSENTIAL FOR POTEXVIRUS ACCUMULATION 1 from Arabidopsis thaliana (Mouse-ear cress).